The following is a 781-amino-acid chain: Dynamin-related protein dnm1 (781 aa).

Residues 23-328 (FLDLPSIVVV…LVSHIRERLP (306 aa)) enclose the Dynamin-type G domain. The interval 33–40 (GSQSCGKS) is G1 motif. GTP is bound at residue 33–40 (GSQSCGKS). A G2 motif region spans residues 59 to 61 (VTR). The segment at 76 to 103 (KNNHDEESTSDNNSEETSAAGETGSLEG) is disordered. Residues 170–173 (DLPG) form a G3 motif region. GTP contacts are provided by residues 170-174 (DLPGL) and 239-242 (TKLD). The segment at 239 to 242 (TKLD) is G4 motif. Positions 269 to 272 (VNRS) are G5 motif. A GED domain is found at 694-781 (VDLIKELITS…QANKIISTVF (88 aa)).

The protein belongs to the TRAFAC class dynamin-like GTPase superfamily. Dynamin/Fzo/YdjA family.

It is found in the cytoplasm. The protein localises to the mitochondrion outer membrane. The catalysed reaction is GTP + H2O = GDP + phosphate + H(+). Microtubule-associated force-producing protein that mediates mitochondrial fission during interphasic growth and at cell division. Fission of mitochondria occurs in many cell types and constitutes an important step in mitochondria morphology, which is balanced between fusion and fission. With vps1, acts redundantly in peroxisome biogenesis, which is under cell cycle control. The protein is Dynamin-related protein dnm1 (dnm1) of Schizosaccharomyces pombe (strain 972 / ATCC 24843) (Fission yeast).